The primary structure comprises 162 residues: UPF0178 protein RHOS4_24670 (162 aa).

This sequence belongs to the UPF0178 family.

The polypeptide is UPF0178 protein RHOS4_24670 (Cereibacter sphaeroides (strain ATCC 17023 / DSM 158 / JCM 6121 / CCUG 31486 / LMG 2827 / NBRC 12203 / NCIMB 8253 / ATH 2.4.1.) (Rhodobacter sphaeroides)).